We begin with the raw amino-acid sequence, 470 residues long: Iron-sulfur cluster assembly SufBD family protein ABCI9 (470 aa).

The protein belongs to the iron-sulfur cluster assembly SufBD family.

The sequence is that of Iron-sulfur cluster assembly SufBD family protein ABCI9 (ABCI9) from Arabidopsis thaliana (Mouse-ear cress).